The chain runs to 85 residues: Large ribosomal subunit protein bL27 (85 aa).

The span at 1–11 shows a compositional bias: polar residues; that stretch reads MASKASGGSTR. The interval 1 to 20 is disordered; it reads MASKASGGSTRNGRDSISKR.

This sequence belongs to the bacterial ribosomal protein bL27 family.

The protein is Large ribosomal subunit protein bL27 of Sulfurihydrogenibium sp. (strain YO3AOP1).